The chain runs to 317 residues: Acetyl-coenzyme A carboxylase carboxyl transferase subunit alpha (317 aa).

The CoA carboxyltransferase C-terminal domain maps to 40 to 293 (LEGRVRDAMM…GTVIADALKE (254 aa)).

Belongs to the AccA family. Acetyl-CoA carboxylase is a heterohexamer composed of biotin carboxyl carrier protein (AccB), biotin carboxylase (AccC) and two subunits each of ACCase subunit alpha (AccA) and ACCase subunit beta (AccD).

It is found in the cytoplasm. It carries out the reaction N(6)-carboxybiotinyl-L-lysyl-[protein] + acetyl-CoA = N(6)-biotinyl-L-lysyl-[protein] + malonyl-CoA. It functions in the pathway lipid metabolism; malonyl-CoA biosynthesis; malonyl-CoA from acetyl-CoA: step 1/1. Functionally, component of the acetyl coenzyme A carboxylase (ACC) complex. First, biotin carboxylase catalyzes the carboxylation of biotin on its carrier protein (BCCP) and then the CO(2) group is transferred by the carboxyltransferase to acetyl-CoA to form malonyl-CoA. The polypeptide is Acetyl-coenzyme A carboxylase carboxyl transferase subunit alpha (Sinorhizobium fredii (strain NBRC 101917 / NGR234)).